We begin with the raw amino-acid sequence, 277 residues long: Co-chaperone protein DjlA (277 aa).

Residues 1-6 (MRYWGK) are Periplasmic-facing. A helical membrane pass occupies residues 7–31 (LLGLVLGVMYAPGVVGALLGLLVGH). Residues 32–277 (MVDRALGAKR…DLIKREKGFK (246 aa)) lie on the Cytoplasmic side of the membrane. In terms of domain architecture, J spans 211 to 277 (DACKVLGVNS…DLIKREKGFK (67 aa)).

As to quaternary structure, homodimer.

It localises to the cell inner membrane. Its function is as follows. Regulatory DnaK co-chaperone. Direct interaction between DnaK and DjlA is needed for the induction of the wcaABCDE operon, involved in the synthesis of a colanic acid polysaccharide capsule, possibly through activation of the RcsB/RcsC phosphotransfer signaling pathway. The colanic acid capsule may help the bacterium survive conditions outside the host. In Yersinia pseudotuberculosis serotype I (strain IP32953), this protein is Co-chaperone protein DjlA.